We begin with the raw amino-acid sequence, 155 residues long: Myosin light chain alkali (155 aa).

EF-hand domains are found at residues 7–41 (REVE…LNLN) and 80–115 (GCYE…LGES).

As to quaternary structure, myosin is a hexamer of 2 heavy chains and 4 light chains. In terms of tissue distribution, indirect flight muscle isoform is found only in the indirect flight muscles. The larval and adult isoform is present in the larval and adult musculature.

The protein is Myosin light chain alkali (Mlc1) of Drosophila melanogaster (Fruit fly).